The following is a 73-amino-acid chain: Protein SlyX homolog (73 aa).

This sequence belongs to the SlyX family.

The chain is Protein SlyX homolog from Pasteurella multocida (strain Pm70).